Consider the following 410-residue polypeptide: LL-diaminopimelate aminotransferase (410 aa).

2 residues coordinate substrate: tyrosine 15 and glycine 42. Pyridoxal 5'-phosphate-binding positions include tyrosine 72, 108–109, tyrosine 132, asparagine 187, tyrosine 218, and 246–248; these read AK and SFS. Substrate contacts are provided by lysine 109, tyrosine 132, and asparagine 187. The residue at position 249 (lysine 249) is an N6-(pyridoxal phosphate)lysine. Arginine 257 and asparagine 292 together coordinate pyridoxal 5'-phosphate. Substrate contacts are provided by asparagine 292 and arginine 388.

It belongs to the class-I pyridoxal-phosphate-dependent aminotransferase family. LL-diaminopimelate aminotransferase subfamily. In terms of assembly, homodimer. The cofactor is pyridoxal 5'-phosphate.

It catalyses the reaction (2S,6S)-2,6-diaminopimelate + 2-oxoglutarate = (S)-2,3,4,5-tetrahydrodipicolinate + L-glutamate + H2O + H(+). It participates in amino-acid biosynthesis; L-lysine biosynthesis via DAP pathway; LL-2,6-diaminopimelate from (S)-tetrahydrodipicolinate (aminotransferase route): step 1/1. In terms of biological role, involved in the synthesis of meso-diaminopimelate (m-DAP or DL-DAP), required for both lysine and peptidoglycan biosynthesis. Catalyzes the direct conversion of tetrahydrodipicolinate to LL-diaminopimelate. This chain is LL-diaminopimelate aminotransferase, found in Picosynechococcus sp. (strain ATCC 27264 / PCC 7002 / PR-6) (Agmenellum quadruplicatum).